Reading from the N-terminus, the 228-residue chain is Flavin-dependent thymidylate synthase (228 aa).

Residues 1-217 enclose the ThyX domain; sequence MEYKILDKGF…PWTFEAFLKF (217 aa). Residues threonine 55, 78–80, and glutamate 86 contribute to the FAD site; that span reads RHR. Residues 75 to 78, 86 to 90, and arginine 156 each bind dUMP; these read QWFR and EASLR. The ThyX motif signature appears at 78–88; sequence RHRIGSFNEAS. Residues 172–174 and asparagine 178 each bind FAD; that span reads NAR. A dUMP-binding site is contributed by arginine 183. The active-site Involved in ionization of N3 of dUMP, leading to its activation is the arginine 183.

This sequence belongs to the thymidylate synthase ThyX family. Homotetramer. FAD serves as cofactor.

It catalyses the reaction dUMP + (6R)-5,10-methylene-5,6,7,8-tetrahydrofolate + NADPH + H(+) = dTMP + (6S)-5,6,7,8-tetrahydrofolate + NADP(+). Its pathway is pyrimidine metabolism; dTTP biosynthesis. Catalyzes the reductive methylation of 2'-deoxyuridine-5'-monophosphate (dUMP) to 2'-deoxythymidine-5'-monophosphate (dTMP) while utilizing 5,10-methylenetetrahydrofolate (mTHF) as the methyl donor, and NADPH and FADH(2) as the reductant. The protein is Flavin-dependent thymidylate synthase of Thermosipho africanus (strain TCF52B).